A 238-amino-acid polypeptide reads, in one-letter code: Outer membrane protein A (238 aa).

5 consecutive transmembrane segments (beta stranded) span residues 1-8 (LTAKLGYP), 13-21 (LDIYTRLGG), 43-52 (PVFAGGVEYA), 57-64 (IATRLEYQ), and 83-91 (LLSVGVSYR). Repeat copies occupy residues 104–105 (AP), 106–107 (AP), and 108–109 (AP). The tract at residues 104 to 109 (APAPAP) is 3 X 2 AA tandem repeats of A-P. One can recognise an OmpA-like domain in the interval 111–238 (VQTKHFTLKS…RRVEIEVKGI (128 aa)). An intrachain disulfide couples Cys212 to Cys224.

This sequence belongs to the outer membrane OOP (TC 1.B.6) superfamily. OmpA family. Monomer and homodimer.

Its subcellular location is the cell outer membrane. Its function is as follows. With TolR probably plays a role in maintaining the position of the peptidoglycan cell wall in the periplasm. Acts as a porin with low permeability that allows slow penetration of small solutes; an internal gate slows down solute passage. The chain is Outer membrane protein A from Citrobacter freundii.